A 151-amino-acid chain; its full sequence is Deoxyuridine 5'-triphosphate nucleotidohydrolase (151 aa).

Substrate is bound by residues Arg-70–Gly-72, Asn-83, Leu-87–Asp-89, and Met-97.

It belongs to the dUTPase family. Mg(2+) is required as a cofactor.

It catalyses the reaction dUTP + H2O = dUMP + diphosphate + H(+). The protein operates within pyrimidine metabolism; dUMP biosynthesis; dUMP from dCTP (dUTP route): step 2/2. In terms of biological role, this enzyme is involved in nucleotide metabolism: it produces dUMP, the immediate precursor of thymidine nucleotides and it decreases the intracellular concentration of dUTP so that uracil cannot be incorporated into DNA. This Ectopseudomonas mendocina (strain ymp) (Pseudomonas mendocina) protein is Deoxyuridine 5'-triphosphate nucleotidohydrolase.